We begin with the raw amino-acid sequence, 132 residues long: Translation initiation factor 5A (132 aa).

Lys-36 is modified (hypusine).

Belongs to the eIF-5A family.

The protein localises to the cytoplasm. In terms of biological role, functions by promoting the formation of the first peptide bond. In Pyrobaculum neutrophilum (strain DSM 2338 / JCM 9278 / NBRC 100436 / V24Sta) (Thermoproteus neutrophilus), this protein is Translation initiation factor 5A (eIF5A).